The primary structure comprises 280 residues: SPX domain-containing protein 2 (280 aa).

One can recognise an SPX domain in the interval 1-162 (MKFGKSLSSQ…GSMIRLPFVQ (162 aa)). Disordered stretches follow at residues 191–244 (PTNE…KSTV) and 257–280 (GSSTVSVFSLPPLHGSNGQDEPGR).

In terms of assembly, interacts (via SPX domain) with PHR2 (via C-terminus). Interacts with RLI1 in the nucleus to prevents its positive regulation of leaf inclination during phosphate (Pi) starvation. In terms of tissue distribution, predominantly expressed in roots, leaves and seeds. Localized in leaves lamina joints.

It is found in the nucleus. Functionally, inhibits PHR2 DNA-binding activity via a phosphate (Pi)-dependent protein interaction. Together with SPX1, plays a negative role in the regulation of leaf inclination by preventing RLI1 transcription factor activity in Pi depleted conditions. This chain is SPX domain-containing protein 2, found in Oryza sativa subsp. japonica (Rice).